Consider the following 475-residue polypeptide: Ankyrin repeat, SAM and basic leucine zipper domain-containing protein 1 (475 aa).

3 positions are modified to phosphoserine: S17, S18, and S20. ANK repeat units follow at residues 45–74 (EKNETFKKALTTGDISLVQELLDSGISVES), 78–107 (YGWTPLMYAASVSNVELVRVLLDRGANASF), 110–144 (DKQTILITACSARGSEEQILKCVELLLSRNADPNV), 148–177 (RLMTPIMYAARDGHPQVVALLVAHGAEVNS), 181–210 (NGYTALTWAARQGHKNVVLKLLELGANKML), and 214–243 (DGKTPSEIAKRNKHLEIFNFLSLTLNPLEG). One can recognise an SAM domain in the interval 272–334 (SYTAFGDLEI…KILAALKELE (63 aa)).

As to quaternary structure, interacts with DDX4, PIWIL1, RANBP9 and TDRD1.

Its subcellular location is the cytoplasm. Functionally, plays a central role during spermatogenesis by repressing transposable elements and preventing their mobilization, which is essential for the germline integrity. Acts via the piRNA metabolic process, which mediates the repression of transposable elements during meiosis by forming complexes composed of piRNAs and Piwi proteins and governs the methylation and subsequent repression of transposons. Its association with pi-bodies suggests a participation in the primary piRNAs metabolic process. Required prior to the pachytene stage to facilitate the production of multiple types of piRNAs, including those associated with repeats involved in the regulation of retrotransposons. May act by mediating protein-protein interactions during germ cell maturation. The protein is Ankyrin repeat, SAM and basic leucine zipper domain-containing protein 1 (ASZ1) of Mustela putorius furo (European domestic ferret).